Reading from the N-terminus, the 147-residue chain is AP-2 complex subunit sigma (147 aa).

The protein belongs to the adaptor complexes small subunit family. Adaptor protein complex 2 (AP-2) is a heterotetramer composed of two large adaptins (alpha-type subunit APL3 and beta-type subunit APL1), a medium chain (mu-type subunit APM4) and a small adaptin (sigma-type subunit APS2). Interacts with APL1.

The protein localises to the cell membrane. Its subcellular location is the membrane. It is found in the coated pit. Component of the adaptor complexes which link clathrin to receptors in coated vesicles. Clathrin-associated protein complexes are believed to interact with the cytoplasmic tails of membrane proteins, leading to their selection and concentration. The polypeptide is AP-2 complex subunit sigma (APS2) (Saccharomyces cerevisiae (strain ATCC 204508 / S288c) (Baker's yeast)).